The chain runs to 72 residues: Delta-actitoxin-Avd2b 3 (72 aa).

The first 21 residues, 1-21 (MMSRLLVFLMLGAAFMLVVSA), serve as a signal peptide directing secretion. Residues 22-42 (NDAYGDEPAFKDLNQGDESLG) constitute a propeptide that is removed on maturation. Intrachain disulfides connect Cys-47–Cys-62, Cys-48–Cys-56, and Cys-50–Cys-67.

This sequence belongs to the sea anemone short toxin (type III) family.

The protein resides in the secreted. The protein localises to the nematocyst. Its function is as follows. Voltage-gated sodium channel (Nav) inhibitor. 1 uM completely inhibits insect voltage-gated sodium channel inactivation (DmNav1 from D.melanogaster). The protein is Delta-actitoxin-Avd2b 3 of Anemonia viridis (Snakelocks anemone).